Consider the following 274-residue polypeptide: Copper chaperone for superoxide dismutase (274 aa).

Residues 11–74 form the HMA domain; it reads VCALEFAVQM…LLESTGRQAV (64 aa). Residues Cys22 and Cys25 each contribute to the Cu cation site. A Glycyl lysine isopeptide (Lys-Gly) (interchain with G-Cter in ubiquitin) cross-link involves residue Lys76. Residues 88–234 are superoxide dismutase-like; it reads AAVAILEGCG…LACGIIARSA (147 aa). The cysteines at positions 141 and 227 are disulfide-linked. The Zn(2+) site is built by His147, His155, His164, and Asp167. Residues Lys189, Lys216, and Lys241 each participate in a glycyl lysine isopeptide (Lys-Gly) (interchain with G-Cter in ubiquitin) cross-link. Residues Cys244 and Cys246 each contribute to the Cu cation site. Ser267 is modified (phosphoserine).

In the C-terminal section; belongs to the Cu-Zn superoxide dismutase family. Homodimer, and heterodimer with SOD1. Interacts with COMMD1. Interacts with XIAP/BIRC4. Interacts with SLC31A1(via C-terminal domain); this interaction is Cu(1+)-mediated. The heterodimer CCS:SOD1 interacts with SLC31A1; this heterotrimer is Cu(1+)-mediated and its maintenance is regulated through SOD1 activation. Cu(2+) is required as a cofactor. The cofactor is Zn(2+). In terms of processing, ubiquitinion by XIAP/BIRC4 leads to enhancement of its chaperone activity toward its physiologic target, SOD1, rather than proteasomal degradation. XIAP/BIRC4 preferentially ubiquitinates at Lys-241. Ubiquitous.

It is found in the cytoplasm. Delivers copper to copper zinc superoxide dismutase (SOD1). The chain is Copper chaperone for superoxide dismutase from Mus musculus (Mouse).